A 161-amino-acid chain; its full sequence is DNA-directed RNA polymerase 18 kDa subunit (161 aa).

Belongs to the poxviridae DNA-directed RNA polymerase 18 kDa subunit family. The DNA-dependent RNA polymerase used for intermediate and late genes expression consists of eight subunits 147 kDa, 133 kDa, 35 kDa, 30 kDa, 22 kDa, 19 kDa, 18 kDa and 7 kDa totalling more than 500 kDa in mass. The same holoenzyme, with the addition of the transcription-specificity factor RAP94, is used for early gene expression.

It is found in the virion. It catalyses the reaction RNA(n) + a ribonucleoside 5'-triphosphate = RNA(n+1) + diphosphate. In terms of biological role, part of the DNA-dependent RNA polymerase which catalyzes the transcription of viral DNA into RNA using the four ribonucleoside triphosphates as substrates. Responsible for the transcription of early, intermediate and late genes. DNA-dependent RNA polymerase associates with the early transcription factor (ETF) thereby allowing the early genes transcription. Late transcription, and probably also intermediate transcription, require newly synthesized RNA polymerase. This chain is DNA-directed RNA polymerase 18 kDa subunit (RPO18), found in Vertebrata (FPV).